Consider the following 210-residue polypeptide: Imidazoleglycerol-phosphate dehydratase (210 aa).

The interval 185 to 210 (PRRGGSIPSSKGVLEQAGDNNTEKSK) is disordered.

The protein belongs to the imidazoleglycerol-phosphate dehydratase family.

Its subcellular location is the cytoplasm. It catalyses the reaction D-erythro-1-(imidazol-4-yl)glycerol 3-phosphate = 3-(imidazol-4-yl)-2-oxopropyl phosphate + H2O. Its pathway is amino-acid biosynthesis; L-histidine biosynthesis; L-histidine from 5-phospho-alpha-D-ribose 1-diphosphate: step 6/9. The polypeptide is Imidazoleglycerol-phosphate dehydratase (Prochlorococcus marinus (strain SARG / CCMP1375 / SS120)).